A 242-amino-acid polypeptide reads, in one-letter code: Caffeoyl-CoA O-methyltransferase 4 (242 aa).

Substrate is bound at residue Lys16. S-adenosyl-L-methionine-binding positions include Thr58, Glu80, 82–83 (GV), Ser88, Asp106, and Ala135. Asp158 serves as a coordination point for substrate. Asp158 is a binding site for a divalent metal cation. Asp160 is a binding site for S-adenosyl-L-methionine. Residues Asp184 and Asn185 each coordinate a divalent metal cation. Asn189 is a substrate binding site.

Belongs to the class I-like SAM-binding methyltransferase superfamily. Cation-dependent O-methyltransferase family. CCoAMT subfamily. Mg(2+) serves as cofactor. In terms of tissue distribution, mostly expressed in the bottom and middle parts of the stems.

It catalyses the reaction (E)-caffeoyl-CoA + S-adenosyl-L-methionine = (E)-feruloyl-CoA + S-adenosyl-L-homocysteine + H(+). Its pathway is aromatic compound metabolism; phenylpropanoid biosynthesis. Methylates caffeoyl-CoA to feruloyl-CoA and 5-hydroxyferuloyl-CoA to sinapoyl-CoA. Plays a role in the synthesis of feruloylated polysaccharides. Involved in the reinforcement of the plant cell wall. Also involved in the responding to wounding or pathogen challenge by the increased formation of cell wall-bound ferulic acid polymers. This Nicotiana tabacum (Common tobacco) protein is Caffeoyl-CoA O-methyltransferase 4 (CCOAOMT4).